Consider the following 288-residue polypeptide: Acetyl-coenzyme A carboxylase carboxyl transferase subunit beta (288 aa).

Residues 34-288 (LFAKCPACKH…HLVAFHGGVS (255 aa)) form the CoA carboxyltransferase N-terminal domain. Zn(2+) contacts are provided by Cys38, Cys41, Cys56, and Cys59. A C4-type zinc finger spans residues 38–59 (CPACKHMIYQKDLGPAKICPTC).

It belongs to the AccD/PCCB family. As to quaternary structure, acetyl-CoA carboxylase is a heterohexamer composed of biotin carboxyl carrier protein (AccB), biotin carboxylase (AccC) and two subunits each of ACCase subunit alpha (AccA) and ACCase subunit beta (AccD). It depends on Zn(2+) as a cofactor.

Its subcellular location is the cytoplasm. It catalyses the reaction N(6)-carboxybiotinyl-L-lysyl-[protein] + acetyl-CoA = N(6)-biotinyl-L-lysyl-[protein] + malonyl-CoA. It participates in lipid metabolism; malonyl-CoA biosynthesis; malonyl-CoA from acetyl-CoA: step 1/1. In terms of biological role, component of the acetyl coenzyme A carboxylase (ACC) complex. Biotin carboxylase (BC) catalyzes the carboxylation of biotin on its carrier protein (BCCP) and then the CO(2) group is transferred by the transcarboxylase to acetyl-CoA to form malonyl-CoA. This Streptococcus equi subsp. equi (strain 4047) protein is Acetyl-coenzyme A carboxylase carboxyl transferase subunit beta.